Here is a 404-residue protein sequence, read N- to C-terminus: Tryptophan synthase beta chain (404 aa).

Lys-90 bears the N6-(pyridoxal phosphate)lysine mark.

It belongs to the TrpB family. As to quaternary structure, tetramer of two alpha and two beta chains. Pyridoxal 5'-phosphate is required as a cofactor.

It carries out the reaction (1S,2R)-1-C-(indol-3-yl)glycerol 3-phosphate + L-serine = D-glyceraldehyde 3-phosphate + L-tryptophan + H2O. It functions in the pathway amino-acid biosynthesis; L-tryptophan biosynthesis; L-tryptophan from chorismate: step 5/5. In terms of biological role, the beta subunit is responsible for the synthesis of L-tryptophan from indole and L-serine. In Geobacillus thermodenitrificans (strain NG80-2), this protein is Tryptophan synthase beta chain.